The sequence spans 218 residues: Pyridoxine/pyridoxamine 5'-phosphate oxidase (218 aa).

Residues 14–17 (RREY) and lysine 72 contribute to the substrate site. Residues 67–72 (RIVLLK), 82–83 (YT), arginine 88, lysine 89, and glutamine 111 contribute to the FMN site. Substrate-binding residues include tyrosine 129, arginine 133, and serine 137. FMN contacts are provided by residues 146 to 147 (QS) and tryptophan 191. Residue 197 to 199 (RLH) coordinates substrate. Arginine 201 lines the FMN pocket.

The protein belongs to the pyridoxamine 5'-phosphate oxidase family. As to quaternary structure, homodimer. FMN serves as cofactor.

It carries out the reaction pyridoxamine 5'-phosphate + O2 + H2O = pyridoxal 5'-phosphate + H2O2 + NH4(+). The enzyme catalyses pyridoxine 5'-phosphate + O2 = pyridoxal 5'-phosphate + H2O2. It participates in cofactor metabolism; pyridoxal 5'-phosphate salvage; pyridoxal 5'-phosphate from pyridoxamine 5'-phosphate: step 1/1. Its pathway is cofactor metabolism; pyridoxal 5'-phosphate salvage; pyridoxal 5'-phosphate from pyridoxine 5'-phosphate: step 1/1. Catalyzes the oxidation of either pyridoxine 5'-phosphate (PNP) or pyridoxamine 5'-phosphate (PMP) into pyridoxal 5'-phosphate (PLP). The sequence is that of Pyridoxine/pyridoxamine 5'-phosphate oxidase from Escherichia coli O139:H28 (strain E24377A / ETEC).